We begin with the raw amino-acid sequence, 225 residues long: AA9 family lytic polysaccharide monooxygenase A (225 aa).

An N-terminal signal peptide occupies residues M1–A17. Residues H18 and H85 each contribute to the Cu(2+) site. Cystine bridges form between C55–C173 and C143–C225. H159 and Q168 together coordinate O2. Position 170 (Y170) interacts with Cu(2+).

It belongs to the polysaccharide monooxygenase AA9 family. Requires Cu(2+) as cofactor.

Its subcellular location is the secreted. It catalyses the reaction [(1-&gt;4)-beta-D-glucosyl]n+m + reduced acceptor + O2 = 4-dehydro-beta-D-glucosyl-[(1-&gt;4)-beta-D-glucosyl]n-1 + [(1-&gt;4)-beta-D-glucosyl]m + acceptor + H2O.. Is able to utilize various natural phenolic compounds as reducing agents. Most of these reducing agents are present in plants, either free or as lignin building blocks, such as sinapic acid, or as flavonoids such as catechin and dopamine. Phenolic compounds with 1,2-benzenediol and 1,2,3-benzenetriol moieties yield the highest release of oxidized and non-oxidized glucooligosaccharides from cellulose compared to monophenols or sulfur-containing compounds. Functionally, lytic polysaccharide monooxygenase (LPMO) that depolymerizes crystalline and amorphous polysaccharides via the oxidation of scissile alpha- or beta-(1-4)-glycosidic bonds, yielding C1 or C4 oxidation products. Catalysis by LPMOs requires the reduction of the active-site copper from Cu(II) to Cu(I) by a reducing agent and H(2)O(2) or O(2) as a cosubstrate. Shows oxidative cleavage of xylan in addition to cellulose. Shows a strong synergistic effect with endoglucanase I (EGI) with a 16-fold higher release of detected oligosaccharides. This Thermothelomyces thermophilus (strain ATCC 42464 / BCRC 31852 / DSM 1799) (Sporotrichum thermophile) protein is AA9 family lytic polysaccharide monooxygenase A.